Here is a 77-residue protein sequence, read N- to C-terminus: Protein ImpC (77 aa).

Belongs to the DinI family.

This Salmonella typhimurium protein is Protein ImpC (impC).